The sequence spans 384 residues: uncharacterized protein (384 aa).

To S.pombe SpAC2E11.17.

This is an uncharacterized protein from Schizosaccharomyces pombe (strain 972 / ATCC 24843) (Fission yeast).